A 368-amino-acid polypeptide reads, in one-letter code: tRNA(Met) cytidine acetate ligase (368 aa).

Residues 7-20, Gly-96, Asn-152, and Arg-175 each bind ATP; that span reads IAEF…HKYL.

It belongs to the TmcAL family.

Its subcellular location is the cytoplasm. It catalyses the reaction cytidine(34) in elongator tRNA(Met) + acetate + ATP = N(4)-acetylcytidine(34) in elongator tRNA(Met) + AMP + diphosphate. In terms of biological role, catalyzes the formation of N(4)-acetylcytidine (ac(4)C) at the wobble position of elongator tRNA(Met), using acetate and ATP as substrates. First activates an acetate ion to form acetyladenylate (Ac-AMP) and then transfers the acetyl group to tRNA to form ac(4)C34. This Streptococcus pyogenes serotype M49 (strain NZ131) protein is tRNA(Met) cytidine acetate ligase.